The sequence spans 616 residues: MATTQSETDCYDIIEVLGKGTFGEVAKGWRRSTGEMVAIKILKNDAYRNRIIKNELKLLHCMRGLDPEEAHVIRFLEFFHDALKFYLVFELLEQNLFEFQKENNFAPLPARHIRTVTLQVLRALARLKELAIIHADLKPENIMLVDQTRCPFRVKVIDFGSASIFSEVRYVKEPYIQSRFYRAPEILLGLPFCEKVDVWSLGCVMAELHLGWPLYPGNNEYDQVRYICETQGLPKPHLLHAARKAHHFFKRNPHPDAANPWQLKSSADYLAETKVRPLERRKYMLKSLDQIETVNGGSVASRLTFPDREALAEHADLKSMVELIKRMLTWESHERISPSAALRHPFVSMQQLRNAHETTHYYQLSLRSYRLSLQVEGKPPAPVVAAEDGTPYYRLAEEKEAAGMGSVASSSPFFREEKAPGMQRAIDQLDDLSLQEAGHGLWGETCTDVVSDMMAPLKAAITGRHMPDSGPEPILAFYSSRLAGRHKARKPPAGSKSDSNLSNLIRLSQVSPEDDRPCRGSSWEEGEHLGASAEPPAILQRDGDGPNIDNMTMEAERPDPELFDPSSCPGEWLSEPDWTLEGVRGPRAQGLPPRRSHQHGPPRGATSFLQHVTGHH.

The Protein kinase domain maps to 11 to 347; it reads YDIIEVLGKG…PSAALRHPFV (337 aa). ATP contacts are provided by residues 17–25 and lysine 40; that span reads LGKGTFGEV. Aspartate 136 functions as the Proton acceptor in the catalytic mechanism. A disordered region spans residues 485–616; that stretch reads RHKARKPPAG…SFLQHVTGHH (132 aa). Residues 496 to 511 are compositionally biased toward polar residues; the sequence is KSDSNLSNLIRLSQVS. Position 511 is a phosphoserine (serine 511).

This sequence belongs to the protein kinase superfamily. CMGC Ser/Thr protein kinase family. HIPK subfamily. Post-translationally, autophosphorylated.

The protein localises to the cytoplasm. The catalysed reaction is L-seryl-[protein] + ATP = O-phospho-L-seryl-[protein] + ADP + H(+). The enzyme catalyses L-threonyl-[protein] + ATP = O-phospho-L-threonyl-[protein] + ADP + H(+). Protein kinase that phosphorylates TP53, and thus induces TP53 repression of BIRC5 promoter. May act as a corepressor of transcription factors (Potential). The chain is Homeodomain-interacting protein kinase 4 (HIPK4) from Macaca fascicularis (Crab-eating macaque).